A 216-amino-acid chain; its full sequence is RNA pyrophosphohydrolase (216 aa).

A Nudix hydrolase domain is found at 6–149 (GFRPNVGIIL…KRDVYQLALT (144 aa)). The short motif at 38–59 (GGIKYGETPMQAMYRELHEETG) is the Nudix box element.

The protein belongs to the Nudix hydrolase family. RppH subfamily. Requires a divalent metal cation as cofactor.

Functionally, accelerates the degradation of transcripts by removing pyrophosphate from the 5'-end of triphosphorylated RNA, leading to a more labile monophosphorylated state that can stimulate subsequent ribonuclease cleavage. This is RNA pyrophosphohydrolase from Burkholderia ambifaria (strain MC40-6).